We begin with the raw amino-acid sequence, 31 residues long: Photosystem II reaction center protein T (31 aa).

The chain crosses the membrane as a helical span at residues 3 to 23 (AIVYTFLLVGTLGIIFFAIFF).

This sequence belongs to the PsbT family. As to quaternary structure, PSII is composed of 1 copy each of membrane proteins PsbA, PsbB, PsbC, PsbD, PsbE, PsbF, PsbH, PsbI, PsbJ, PsbK, PsbL, PsbM, PsbT, PsbY, PsbZ, Psb30/Ycf12, at least 3 peripheral proteins of the oxygen-evolving complex and a large number of cofactors. It forms dimeric complexes.

The protein resides in the plastid. Its subcellular location is the chloroplast thylakoid membrane. Found at the monomer-monomer interface of the photosystem II (PS II) dimer, plays a role in assembly and dimerization of PSII. PSII is a light-driven water plastoquinone oxidoreductase, using light energy to abstract electrons from H(2)O, generating a proton gradient subsequently used for ATP formation. The sequence is that of Photosystem II reaction center protein T from Ostreococcus tauri.